The primary structure comprises 106 residues: Phosphoribosyl-ATP pyrophosphatase (106 aa).

This sequence belongs to the PRA-PH family.

Its subcellular location is the cytoplasm. It catalyses the reaction 1-(5-phospho-beta-D-ribosyl)-ATP + H2O = 1-(5-phospho-beta-D-ribosyl)-5'-AMP + diphosphate + H(+). Its pathway is amino-acid biosynthesis; L-histidine biosynthesis; L-histidine from 5-phospho-alpha-D-ribose 1-diphosphate: step 2/9. This is Phosphoribosyl-ATP pyrophosphatase from Rhizorhabdus wittichii (strain DSM 6014 / CCUG 31198 / JCM 15750 / NBRC 105917 / EY 4224 / RW1) (Sphingomonas wittichii).